The primary structure comprises 290 residues: 33 kDa chaperonin (290 aa).

2 disulfides stabilise this stretch: Cys-235–Cys-237 and Cys-268–Cys-271.

The protein belongs to the HSP33 family. Post-translationally, under oxidizing conditions two disulfide bonds are formed involving the reactive cysteines. Under reducing conditions zinc is bound to the reactive cysteines and the protein is inactive.

It is found in the cytoplasm. In terms of biological role, redox regulated molecular chaperone. Protects both thermally unfolding and oxidatively damaged proteins from irreversible aggregation. Plays an important role in the bacterial defense system toward oxidative stress. The protein is 33 kDa chaperonin of Streptococcus pyogenes serotype M4 (strain MGAS10750).